We begin with the raw amino-acid sequence, 329 residues long: Ribose-phosphate pyrophosphokinase B (329 aa).

The Mg(2+) site is built by D131, H133, and E146. The segment at T227–K242 is binding of phosphoribosylpyrophosphate.

It belongs to the ribose-phosphate pyrophosphokinase family. Mg(2+) serves as cofactor.

It is found in the cytoplasm. It carries out the reaction D-ribose 5-phosphate + ATP = 5-phospho-alpha-D-ribose 1-diphosphate + AMP + H(+). It functions in the pathway metabolic intermediate biosynthesis; 5-phospho-alpha-D-ribose 1-diphosphate biosynthesis; 5-phospho-alpha-D-ribose 1-diphosphate from D-ribose 5-phosphate (route I): step 1/1. The polypeptide is Ribose-phosphate pyrophosphokinase B (prsB) (Dictyostelium discoideum (Social amoeba)).